Here is a 302-residue protein sequence, read N- to C-terminus: Lipoyl synthase (302 aa).

Residues Cys-44, Cys-49, Cys-55, Cys-70, Cys-74, Cys-77, and Ser-283 each contribute to the [4Fe-4S] cluster site. The Radical SAM core domain maps to 56–272 (WSKKHATVMI…ARVAKSKGFL (217 aa)).

This sequence belongs to the radical SAM superfamily. Lipoyl synthase family. [4Fe-4S] cluster serves as cofactor.

It is found in the cytoplasm. It catalyses the reaction [[Fe-S] cluster scaffold protein carrying a second [4Fe-4S](2+) cluster] + N(6)-octanoyl-L-lysyl-[protein] + 2 oxidized [2Fe-2S]-[ferredoxin] + 2 S-adenosyl-L-methionine + 4 H(+) = [[Fe-S] cluster scaffold protein] + N(6)-[(R)-dihydrolipoyl]-L-lysyl-[protein] + 4 Fe(3+) + 2 hydrogen sulfide + 2 5'-deoxyadenosine + 2 L-methionine + 2 reduced [2Fe-2S]-[ferredoxin]. Its pathway is protein modification; protein lipoylation via endogenous pathway; protein N(6)-(lipoyl)lysine from octanoyl-[acyl-carrier-protein]: step 2/2. In terms of biological role, catalyzes the radical-mediated insertion of two sulfur atoms into the C-6 and C-8 positions of the octanoyl moiety bound to the lipoyl domains of lipoate-dependent enzymes, thereby converting the octanoylated domains into lipoylated derivatives. The chain is Lipoyl synthase from Orientia tsutsugamushi (strain Ikeda) (Rickettsia tsutsugamushi).